Here is a 263-residue protein sequence, read N- to C-terminus: uncharacterized protein (263 aa).

Position 12–19 (Lys-12–Thr-19) interacts with ATP.

The protein belongs to the ParA family. MinD subfamily.

This is an uncharacterized protein from Methanocaldococcus jannaschii (strain ATCC 43067 / DSM 2661 / JAL-1 / JCM 10045 / NBRC 100440) (Methanococcus jannaschii).